Reading from the N-terminus, the 349-residue chain is Protein-glutamate methylesterase/protein-glutamine glutaminase (349 aa).

The Response regulatory domain occupies 2 to 118 (RVLVVDDSAL…VDLSSVAQEL (117 aa)). 4-aspartylphosphate is present on Asp52. In terms of domain architecture, CheB-type methylesterase spans 159–345 (VLIGSSTGGP…EEIVRFLEVK (187 aa)). Catalysis depends on residues Ser164, His191, and Asp287.

This sequence belongs to the CheB family. In terms of processing, phosphorylated by CheA. Phosphorylation of the N-terminal regulatory domain activates the methylesterase activity.

The protein resides in the cytoplasm. The enzyme catalyses [protein]-L-glutamate 5-O-methyl ester + H2O = L-glutamyl-[protein] + methanol + H(+). It catalyses the reaction L-glutaminyl-[protein] + H2O = L-glutamyl-[protein] + NH4(+). In terms of biological role, involved in chemotaxis. Part of a chemotaxis signal transduction system that modulates chemotaxis in response to various stimuli. Catalyzes the demethylation of specific methylglutamate residues introduced into the chemoreceptors (methyl-accepting chemotaxis proteins or MCP) by CheR. Also mediates the irreversible deamidation of specific glutamine residues to glutamic acid. In Archaeoglobus fulgidus (strain ATCC 49558 / DSM 4304 / JCM 9628 / NBRC 100126 / VC-16), this protein is Protein-glutamate methylesterase/protein-glutamine glutaminase.